The chain runs to 379 residues: UDP-4-amino-4-deoxy-L-arabinose--oxoglutarate aminotransferase (379 aa).

Residue Lys182 is modified to N6-(pyridoxal phosphate)lysine.

Belongs to the DegT/DnrJ/EryC1 family. ArnB subfamily. In terms of assembly, homodimer. It depends on pyridoxal 5'-phosphate as a cofactor.

The catalysed reaction is UDP-4-amino-4-deoxy-beta-L-arabinose + 2-oxoglutarate = UDP-beta-L-threo-pentopyranos-4-ulose + L-glutamate. It participates in nucleotide-sugar biosynthesis; UDP-4-deoxy-4-formamido-beta-L-arabinose biosynthesis; UDP-4-deoxy-4-formamido-beta-L-arabinose from UDP-alpha-D-glucuronate: step 2/3. It functions in the pathway bacterial outer membrane biogenesis; lipopolysaccharide biosynthesis. Functionally, catalyzes the conversion of UDP-4-keto-arabinose (UDP-Ara4O) to UDP-4-amino-4-deoxy-L-arabinose (UDP-L-Ara4N). The modified arabinose is attached to lipid A and is required for resistance to polymyxin and cationic antimicrobial peptides. The polypeptide is UDP-4-amino-4-deoxy-L-arabinose--oxoglutarate aminotransferase (Salmonella paratyphi A (strain ATCC 9150 / SARB42)).